The primary structure comprises 361 residues: NAD(P)H-quinone oxidoreductase subunit 1, chloroplastic (361 aa).

The next 6 membrane-spanning stretches (helical) occupy residues 25 to 45 (IWLL…VLVI), 102 to 122 (VAVV…HLVL), 125 to 145 (LSIG…GLLM), 246 to 266 (YSGI…LVSS), 298 to 318 (VFGT…FLFI), and 334 to 354 (LLNL…LLTT).

The protein belongs to the complex I subunit 1 family. As to quaternary structure, NDH is composed of at least 16 different subunits, 5 of which are encoded in the nucleus.

The protein localises to the plastid. The protein resides in the chloroplast thylakoid membrane. The enzyme catalyses a plastoquinone + NADH + (n+1) H(+)(in) = a plastoquinol + NAD(+) + n H(+)(out). It catalyses the reaction a plastoquinone + NADPH + (n+1) H(+)(in) = a plastoquinol + NADP(+) + n H(+)(out). NDH shuttles electrons from NAD(P)H:plastoquinone, via FMN and iron-sulfur (Fe-S) centers, to quinones in the photosynthetic chain and possibly in a chloroplast respiratory chain. The immediate electron acceptor for the enzyme in this species is believed to be plastoquinone. Couples the redox reaction to proton translocation, and thus conserves the redox energy in a proton gradient. This Nymphaea alba (White water-lily) protein is NAD(P)H-quinone oxidoreductase subunit 1, chloroplastic.